The sequence spans 180 residues: Aspartate 1-decarboxylase (180 aa).

Ser-24 functions as the Schiff-base intermediate with substrate; via pyruvic acid in the catalytic mechanism. Position 24 is a pyruvic acid (Ser) (Ser-24). Residue Thr-56 participates in substrate binding. Tyr-57 serves as the catalytic Proton donor. 72-74 lines the substrate pocket; that stretch reads GAA.

This sequence belongs to the PanD family. Heterooctamer of four alpha and four beta subunits. The cofactor is pyruvate. Post-translationally, is synthesized initially as an inactive proenzyme, which is activated by self-cleavage at a specific serine bond to produce a beta-subunit with a hydroxyl group at its C-terminus and an alpha-subunit with a pyruvoyl group at its N-terminus.

The protein localises to the cytoplasm. It carries out the reaction L-aspartate + H(+) = beta-alanine + CO2. It functions in the pathway cofactor biosynthesis; (R)-pantothenate biosynthesis; beta-alanine from L-aspartate: step 1/1. Catalyzes the pyruvoyl-dependent decarboxylation of aspartate to produce beta-alanine. The polypeptide is Aspartate 1-decarboxylase (Paramagnetospirillum magneticum (strain ATCC 700264 / AMB-1) (Magnetospirillum magneticum)).